Reading from the N-terminus, the 129-residue chain is MRLTPLLAALALPLLTVLATPLTPVGEAEVVEVDVAPRQISLNPASSCPKGQLWCCVSLDLVSNSLIAGLLVTLGILDPTGINTAGVQCTPLSWPFQMSCGNKDLCCDPDLPVVGLLLKLNCRSVNPLL.

The signal sequence occupies residues 1–19 (MRLTPLLAALALPLLTVLA). 4 disulfide bridges follow: Cys-48–Cys-106, Cys-55–Cys-100, Cys-56–Cys-89, and Cys-107–Cys-122.

This sequence belongs to the fungal hydrophobin family. As to quaternary structure, self-assembles to form functional amyloid fibrils called rodlets. Self-assembly into fibrillar rodlets occurs spontaneously at hydrophobic:hydrophilic interfaces and the rodlets further associate laterally to form amphipathic monolayers.

It is found in the secreted. The protein localises to the cell wall. Its function is as follows. Aerial growth, conidiation, and dispersal of filamentous fungi in the environment rely upon a capability of their secreting small amphipathic proteins called hydrophobins (HPBs) with low sequence identity. Class I can self-assemble into an outermost layer of rodlet bundles on aerial cell surfaces, conferring cellular hydrophobicity that supports fungal growth, development and dispersal; whereas Class II form highly ordered films at water-air interfaces through intermolecular interactions but contribute nothing to the rodlet structure. In Pleurotus ostreatus (strain PC15) (Oyster mushroom), this protein is Class I hydrophobin 11.